The following is a 131-amino-acid chain: Small ribosomal subunit protein uS8 (131 aa).

It belongs to the universal ribosomal protein uS8 family. As to quaternary structure, part of the 30S ribosomal subunit. Contacts proteins S5 and S12.

In terms of biological role, one of the primary rRNA binding proteins, it binds directly to 16S rRNA central domain where it helps coordinate assembly of the platform of the 30S subunit. The protein is Small ribosomal subunit protein uS8 of Burkholderia mallei (strain NCTC 10247).